A 244-amino-acid chain; its full sequence is High frequency lysogenization protein HflD homolog (244 aa).

This sequence belongs to the HflD family.

It localises to the cytoplasm. Its subcellular location is the cell inner membrane. This chain is High frequency lysogenization protein HflD homolog, found in Acinetobacter baumannii (strain ATCC 17978 / DSM 105126 / CIP 53.77 / LMG 1025 / NCDC KC755 / 5377).